Here is a 376-residue protein sequence, read N- to C-terminus: ATP phosphoribosyltransferase regulatory subunit (376 aa).

It belongs to the class-II aminoacyl-tRNA synthetase family. HisZ subfamily. Heteromultimer composed of HisG and HisZ subunits.

The protein localises to the cytoplasm. It participates in amino-acid biosynthesis; L-histidine biosynthesis; L-histidine from 5-phospho-alpha-D-ribose 1-diphosphate: step 1/9. Required for the first step of histidine biosynthesis. May allow the feedback regulation of ATP phosphoribosyltransferase activity by histidine. The protein is ATP phosphoribosyltransferase regulatory subunit of Brucella ovis (strain ATCC 25840 / 63/290 / NCTC 10512).